Consider the following 229-residue polypeptide: VLSDQGALFEPCSTQDIACLSRATQQFLEKACRGVPEYDIRPIDPLIISSLDVAAYDDIGLIFHFKNLNITGLKNQKISDFRMDTTRKSVLLKTQADLNVVADVVIELSKQSKSFAGVMNIQASIIGGAKYSYDLQDDSKGVKHFEVGQETISCESIGEPAVNLNPELADALLKDPDTTHYRKDYEAHRVSIRQRSLCKIVELCYVDVVHNIRAVAKILPSTAFFTDVN.

A signal peptide spans 1-3; it reads VLS.

The protein localises to the secreted. In terms of biological role, prevents juvenile hormone from being hydrolyzed by general esterases by combining with it specifically. This chain is Juvenile hormone-binding protein (JHBP), found in Manduca sexta (Tobacco hawkmoth).